Consider the following 359-residue polypeptide: Nicotinate-nucleotide--dimethylbenzimidazole phosphoribosyltransferase (359 aa).

Catalysis depends on Glu318, which acts as the Proton acceptor.

This sequence belongs to the CobT family. As to quaternary structure, homodimer.

It carries out the reaction 5,6-dimethylbenzimidazole + nicotinate beta-D-ribonucleotide = alpha-ribazole 5'-phosphate + nicotinate + H(+). The protein operates within nucleoside biosynthesis; alpha-ribazole biosynthesis; alpha-ribazole from 5,6-dimethylbenzimidazole: step 1/2. Its function is as follows. Catalyzes the synthesis of alpha-ribazole-5'-phosphate from nicotinate mononucleotide (NAMN) and 5,6-dimethylbenzimidazole (DMB). The polypeptide is Nicotinate-nucleotide--dimethylbenzimidazole phosphoribosyltransferase (Escherichia coli O8 (strain IAI1)).